Reading from the N-terminus, the 133-residue chain is Small ribosomal subunit protein uS8 (133 aa).

This sequence belongs to the universal ribosomal protein uS8 family. Part of the 30S ribosomal subunit. Contacts proteins S5 and S12.

In terms of biological role, one of the primary rRNA binding proteins, it binds directly to 16S rRNA central domain where it helps coordinate assembly of the platform of the 30S subunit. The polypeptide is Small ribosomal subunit protein uS8 (Chlamydia felis (strain Fe/C-56) (Chlamydophila felis)).